A 466-amino-acid chain; its full sequence is MIKLFNSLTNKKEPFVPIEEGKVKMYCCGPTVYNYIHIGNARPPIVYDMVRRYLTYRGYDVTFVSNFTDVDDKIIRAANELGEEVAAVAERFIKAYYADTCALNVKEADLHPRVTETMDDIIAFIADLEKKGFAYEAGGDVYFRTRKFNGYGKLSGQALDDLQSGARIEVDERKEDPLDFVLWKAAKPNEISWSSPWGEGRPGWHIECSAMIKKSLGDTIDIHAGGKDLTFPHHENEIAQSEALTGKKLANYWMHNGFVNINNEKMSKSLGNFVLAHDIIQQYSPEVVRFFMLTAHYRTPINFSDELLKGAEAGLERLKNTVANLQHRLAETADMGAEEEWLEKIAGAKQRFIEEMDDDFNSANAISVLFDLAKEANIYMSEAQTSKKVLNAFLELFAEFGEVLGVSFTQQEEELLDAEIEALIEERNVARKERNFARADEIRDLLKEKNIVLEDTPQGVRWKRGS.

Cysteine 28 lines the Zn(2+) pocket. Positions 30 to 40 (PTVYNYIHIGN) match the 'HIGH' region motif. Residues cysteine 208, histidine 233, and glutamate 237 each coordinate Zn(2+). The short motif at 265 to 269 (KMSKS) is the 'KMSKS' region element. Lysine 268 is a binding site for ATP. Serine 269 bears the Phosphoserine mark.

It belongs to the class-I aminoacyl-tRNA synthetase family. In terms of assembly, monomer. Requires Zn(2+) as cofactor.

The protein resides in the cytoplasm. The enzyme catalyses tRNA(Cys) + L-cysteine + ATP = L-cysteinyl-tRNA(Cys) + AMP + diphosphate. This Shouchella clausii (strain KSM-K16) (Alkalihalobacillus clausii) protein is Cysteine--tRNA ligase.